Reading from the N-terminus, the 159-residue chain is MTLEEVRGQDTVPESTARMQGAGKALHELLLSAHGQGCLTAGVYESAKVLNVDPDNVTFCVLAADEEDEGDIALQIHFTLIQAFCCENDIDIVRVGDVQRLAAIVGADEEGGAPGDLHCILISNPNEDTWKDPALEKLSLFCEESRSFNDWVPSITLPE.

The interval valine 43 to cysteine 86 is homodimerization.

It belongs to the GADD45 family. In terms of assembly, undergoes concentration-dependent homodimerization, which is required for growth inhibititory activity and enhances interaction with PCNA. Interacts with GADD45GIP1. Interacts with PCNA.

Functionally, involved in the regulation of growth and apoptosis. Mediates activation of stress-responsive MTK1/MEKK4 MAPKKK. The sequence is that of Growth arrest and DNA damage-inducible protein GADD45 gamma (Gadd45g) from Mus musculus (Mouse).